Reading from the N-terminus, the 153-residue chain is Ribonuclease H (153 aa).

The 142-residue stretch at 1-142 folds into the RNase H type-1 domain; that stretch reads MRKKIEIFTD…CDELARIAAE (142 aa). Mg(2+) contacts are provided by Asp-10, Glu-48, Asp-70, and Asp-134.

This sequence belongs to the RNase H family. Monomer. The cofactor is Mg(2+).

It is found in the cytoplasm. The catalysed reaction is Endonucleolytic cleavage to 5'-phosphomonoester.. Its function is as follows. Endonuclease that specifically degrades the RNA of RNA-DNA hybrids. The protein is Ribonuclease H of Baumannia cicadellinicola subsp. Homalodisca coagulata.